We begin with the raw amino-acid sequence, 822 residues long: Putative endoplasmic reticulum metallopeptidase 1 (822 aa).

The Cytoplasmic portion of the chain corresponds to 1–14 (MVLVCASSSKCKRN). A helical transmembrane segment spans residues 15-35 (TFLQLAMVLFAVVMARIALYF). The Lumenal segment spans residues 36-365 (HNHLDEPLVD…FNSLFFMYSK (330 aa)). A glycan (N-linked (GlcNAc...) asparagine) is linked at N146. Zn(2+) is bound by residues H161 and D173. E207 (proton acceptor) is an active-site residue. Positions 208 and 234 each coordinate Zn(2+). Residue N291 is glycosylated (N-linked (GlcNAc...) asparagine). H307 is a binding site for Zn(2+). The chain crosses the membrane as a helical span at residues 366-384 (LTSKILNTLVGGLGILLTL). Topologically, residues 385 to 392 (RGSEGSFT) are cytoplasmic. A helical membrane pass occupies residues 393–413 (VALIAQVISIAGIFVIPNIWA). At 414-431 (YILGNVLDCGMSWFRNEY) the chain is on the lumenal side. The helical transmembrane segment at 432–452 (WPLFIYLPAIFASLFFTESLF) threads the bilayer. At 453 to 463 (KRSEHLALRAT) the chain is on the cytoplasmic side. Residues 464-484 (IFIFSLLTFIPLPSAYLFTII) traverse the membrane as a helical segment. Position 485 (D485) is a topological domain, lumenal. A helical membrane pass occupies residues 486-506 (FFMVFALFLNDKILAKPGTVH). At 507–514 (PLTYFIGS) the chain is on the cytoplasmic side. The chain crosses the membrane as a helical span at residues 515 to 535 (IGAMTVGFESAINLLEIFVPL). At 536-547 (TGRIGTDKVADN) the chain is on the lumenal side. Residues 548–568 (VVATVCVCGFNIYFPLMSPWI) traverse the membrane as a helical segment. The Cytoplasmic portion of the chain corresponds to 569-575 (QRFRSRC). A helical transmembrane segment spans residues 576 to 596 (CFRLGLLFSIFVVGFSSFILA). The Lumenal segment spans residues 597-822 (KQDTYYDSLH…GVVSGNFKLE (226 aa)). N-linked (GlcNAc...) asparagine glycosylation is found at N617, N682, N706, and N758.

It belongs to the peptidase M28 family. M28B subfamily. It depends on Zn(2+) as a cofactor.

It localises to the endoplasmic reticulum membrane. The protein is Putative endoplasmic reticulum metallopeptidase 1 of Schizosaccharomyces pombe (strain 972 / ATCC 24843) (Fission yeast).